Reading from the N-terminus, the 360-residue chain is Terpene synthase 5 (360 aa).

The DDxx(x)D/E motif signature appears at 87-92 (DDFLER). Residues 237–245 (NDCVSYAKE) carry the NDxxSxxxD/E motif motif.

This sequence belongs to the terpene synthase family.

In terms of biological role, terpene synthase that converts its substrate farnesyl diphosphate (FPP) into 2 yet unidentified sesquiterpenes. The polypeptide is Terpene synthase 5 (Dictyostelium purpureum (Slime mold)).